The sequence spans 471 residues: Ribulose bisphosphate carboxylase large chain (471 aa).

Substrate contacts are provided by asparagine 115 and threonine 165. Lysine 167 (proton acceptor) is an active-site residue. Lysine 169 lines the substrate pocket. 3 residues coordinate Mg(2+): lysine 193, aspartate 195, and glutamate 196. At lysine 193 the chain carries N6-carboxylysine. The Proton acceptor role is filled by histidine 286. Arginine 287, histidine 319, and serine 371 together coordinate substrate.

The protein belongs to the RuBisCO large chain family. Type I subfamily. Heterohexadecamer of 8 large chains and 8 small chains. Mg(2+) serves as cofactor.

The protein resides in the carboxysome. It carries out the reaction 2 (2R)-3-phosphoglycerate + 2 H(+) = D-ribulose 1,5-bisphosphate + CO2 + H2O. The enzyme catalyses D-ribulose 1,5-bisphosphate + O2 = 2-phosphoglycolate + (2R)-3-phosphoglycerate + 2 H(+). Its function is as follows. RuBisCO catalyzes two reactions: the carboxylation of D-ribulose 1,5-bisphosphate, the primary event in carbon dioxide fixation, as well as the oxidative fragmentation of the pentose substrate in the photorespiration process. Both reactions occur simultaneously and in competition at the same active site. The chain is Ribulose bisphosphate carboxylase large chain from Prochlorococcus marinus (strain MIT 9515).